A 276-amino-acid polypeptide reads, in one-letter code: Myoblast determination protein 1 homolog 1 (276 aa).

One can recognise a bHLH domain in the interval 84-135 (DRRKAATMRERRRLSKVNDAFETLKRCTSTNPNQRLPKVDILRNAISYIESL). The interval 228 to 253 (CPAVQDGSEGSSPCSPGDGSIASENG) is disordered.

Efficient DNA binding requires dimerization with another bHLH protein.

It is found in the nucleus. May act as a transcriptional activator that promotes transcription of muscle-specific target genes and plays a role in muscle differentiation. The chain is Myoblast determination protein 1 homolog 1 (myod1) from Oncorhynchus mykiss (Rainbow trout).